Reading from the N-terminus, the 353-residue chain is Outer membrane protein P2 (353 aa).

Positions 1-20 (MKKTLAALIVGAFAASAANA) are cleaved as a signal peptide.

The protein belongs to the Gram-negative porin family. As to quaternary structure, homotrimer.

It is found in the cell outer membrane. Its function is as follows. Forms pores that allow passive diffusion of small molecules across the outer membrane. In Haemophilus influenzae, this protein is Outer membrane protein P2 (ompP2).